Reading from the N-terminus, the 666-residue chain is Hybrid PKS-NRPS synthetase pytA (666 aa).

The 340-residue stretch at 1–340 (MDPQQRLLLE…GTNAHAILEE (340 aa)) folds into the Ketosynthase family 3 (KS3) domain. Catalysis depends on for beta-ketoacyl synthase activity residues Cys-87, His-222, and His-260. The segment at 455 to 665 (VFTGQGAQWF…VFVHSLVIKR (211 aa)) is malonyl-CoA:ACP transacylase (MAT) domain. The For malonyltransferase activity role is filled by Ser-548.

In the C-terminal section; belongs to the NRP synthetase family.

Its pathway is secondary metabolite biosynthesis. Its function is as follows. Hybrid PKS-NRPS synthetase; part of the gene cluster that mediates the biosynthesis of pyranterreones, a family of antioxidative compounds. The first step of pyranonigrins biosynthesis is performed by the hybrid PKS-NRPS synthetase pytA that condenses 4 malonyl-CoA units ato the acetyl starter unit by the modular PKS of pytA. The acyl chain is then connected to an L-serine through the amide bond by the modular NRPS of pytA. A tetramic acid is formed and released from the PKS-NRPS pytA to give pyranterreone 5 with the help of the thioesterase pytI. Pyranterreone 5 could be methylated by pytC to afford pyranterreone 6. Both pyranterreones 5 and 6 are subsequently oxidized by the FAD-linked oxidoreductase pytB and the cytochrome P450 monooxygenase pytD to form the fused gamma-pyrone core, resulting in pyranterreones 7 and 11, respectively. The hydroxy group at C-8 of pyranterreones 7 and 11 are dehydrated by the aspartyl protease pytH to form a delta-7 double bond to give pyranterreones 3 and 1, 2 accordingly. The exo-methylene of pyranterreone 3 could be reduced into a pendant methyl by reductase pytE to provide pyranterreone 4, also known as cordylactam. Pyranterreone 4 can be reconverted to pyranterreone 3 through pytB-catalyzed dehydrogenation or further oxidized to pyranterreones 9 and 10. This is Hybrid PKS-NRPS synthetase pytA from Aspergillus terreus (strain NIH 2624 / FGSC A1156).